The sequence spans 701 residues: Elongation factor G (701 aa).

The 283-residue stretch at 8-290 (KHYRNIGISA…AVIEYLPAPI (283 aa)) folds into the tr-type G domain. GTP is bound by residues 17 to 24 (AHIDAGKT), 88 to 92 (DTPGH), and 142 to 145 (NKMD).

It belongs to the TRAFAC class translation factor GTPase superfamily. Classic translation factor GTPase family. EF-G/EF-2 subfamily.

The protein localises to the cytoplasm. Functionally, catalyzes the GTP-dependent ribosomal translocation step during translation elongation. During this step, the ribosome changes from the pre-translocational (PRE) to the post-translocational (POST) state as the newly formed A-site-bound peptidyl-tRNA and P-site-bound deacylated tRNA move to the P and E sites, respectively. Catalyzes the coordinated movement of the two tRNA molecules, the mRNA and conformational changes in the ribosome. This chain is Elongation factor G, found in Hamiltonella defensa subsp. Acyrthosiphon pisum (strain 5AT).